The following is a 183-amino-acid chain: ATP-dependent protease subunit HslV (183 aa).

Residue Thr-2 is part of the active site. Na(+)-binding residues include Gly-157, Cys-160, and Thr-163.

This sequence belongs to the peptidase T1B family. HslV subfamily. In terms of assembly, a double ring-shaped homohexamer of HslV is capped on each side by a ring-shaped HslU homohexamer. The assembly of the HslU/HslV complex is dependent on binding of ATP.

Its subcellular location is the cytoplasm. The enzyme catalyses ATP-dependent cleavage of peptide bonds with broad specificity.. Its activity is regulated as follows. Allosterically activated by HslU binding. Its function is as follows. Protease subunit of a proteasome-like degradation complex believed to be a general protein degrading machinery. The polypeptide is ATP-dependent protease subunit HslV (Vibrio parahaemolyticus serotype O3:K6 (strain RIMD 2210633)).